A 252-amino-acid polypeptide reads, in one-letter code: Uridylate kinase (252 aa).

27-30 contacts ATP; that stretch reads KLGG. Residue glycine 68 participates in UMP binding. The ATP site is built by glycine 69 and arginine 73. UMP is bound by residues aspartate 88 and 149–156; that span reads MGLPYFST. ATP-binding residues include tyrosine 182 and aspartate 185.

This sequence belongs to the UMP kinase family. As to quaternary structure, homohexamer.

The protein resides in the cytoplasm. The catalysed reaction is UMP + ATP = UDP + ADP. Its pathway is pyrimidine metabolism; CTP biosynthesis via de novo pathway; UDP from UMP (UMPK route): step 1/1. Its activity is regulated as follows. Inhibited by UTP. Functionally, catalyzes the reversible phosphorylation of UMP to UDP. This is Uridylate kinase from Mycobacterium sp. (strain JLS).